A 1390-amino-acid polypeptide reads, in one-letter code: DNA-directed RNA polymerase subunit beta (1390 aa).

A disordered region spans residues 556–576; sequence KLADQDAENDPDSDLGTKSSN.

It belongs to the RNA polymerase beta chain family. As to quaternary structure, the RNAP catalytic core consists of 2 alpha, 1 beta, 1 beta' and 1 omega subunit. When a sigma factor is associated with the core the holoenzyme is formed, which can initiate transcription.

It catalyses the reaction RNA(n) + a ribonucleoside 5'-triphosphate = RNA(n+1) + diphosphate. DNA-dependent RNA polymerase catalyzes the transcription of DNA into RNA using the four ribonucleoside triphosphates as substrates. The sequence is that of DNA-directed RNA polymerase subunit beta from Mycoplasmoides gallisepticum (strain R(low / passage 15 / clone 2)) (Mycoplasma gallisepticum).